We begin with the raw amino-acid sequence, 327 residues long: uncharacterized protein (327 aa).

In terms of domain architecture, S4 RNA-binding spans 12–79; sequence KRIDEFLAKE…LKKELDLEIE (68 aa). Aspartate 136 is an active-site residue.

The protein belongs to the pseudouridine synthase RluA family.

It catalyses the reaction a uridine in RNA = a pseudouridine in RNA. This is an uncharacterized protein from Helicobacter pylori (strain J99 / ATCC 700824) (Campylobacter pylori J99).